Consider the following 125-residue polypeptide: Protein ApaG (125 aa).

One can recognise an ApaG domain in the interval 1–125 (MINAPRVCVQ…FRLAIPSLIH (125 aa)).

In Pectobacterium carotovorum subsp. carotovorum (strain PC1), this protein is Protein ApaG.